Here is a 145-residue protein sequence, read N- to C-terminus: D-aminoacyl-tRNA deacylase (145 aa).

Positions 137-138 match the Gly-cisPro motif, important for rejection of L-amino acids motif; sequence GP.

This sequence belongs to the DTD family. As to quaternary structure, homodimer.

The protein localises to the cytoplasm. It carries out the reaction glycyl-tRNA(Ala) + H2O = tRNA(Ala) + glycine + H(+). It catalyses the reaction a D-aminoacyl-tRNA + H2O = a tRNA + a D-alpha-amino acid + H(+). Its function is as follows. An aminoacyl-tRNA editing enzyme that deacylates mischarged D-aminoacyl-tRNAs. Also deacylates mischarged glycyl-tRNA(Ala), protecting cells against glycine mischarging by AlaRS. Acts via tRNA-based rather than protein-based catalysis; rejects L-amino acids rather than detecting D-amino acids in the active site. By recycling D-aminoacyl-tRNA to D-amino acids and free tRNA molecules, this enzyme counteracts the toxicity associated with the formation of D-aminoacyl-tRNA entities in vivo and helps enforce protein L-homochirality. This is D-aminoacyl-tRNA deacylase from Salmonella paratyphi A (strain AKU_12601).